Reading from the N-terminus, the 361-residue chain is Eukaryotic translation initiation factor 3 subunit F (361 aa).

Low complexity-rich tracts occupy residues 1–32 (MASP…SAPT) and 42–73 (ATPA…APAP). The segment at 1-91 (MASPAVPANV…PGPALPGPFP (91 aa)) is disordered. N-acetylalanine is present on A2. Position 52 is a phosphoserine; by CDK11; in vitro (S52). A compositionally biased stretch (pro residues) spans 74 to 90 (AQTPAPSQPGPALPGPF). One can recognise an MPN domain in the interval 96–226 (VRLHPVILAS…IKAYVSTLMG (131 aa)). At K242 the chain carries N6-acetyllysine. At S262 the chain carries Phosphoserine.

It belongs to the eIF-3 subunit F family. Component of the eukaryotic translation initiation factor 3 (eIF-3) complex, which is composed of 13 subunits: EIF3A, EIF3B, EIF3C, EIF3D, EIF3E, EIF3F, EIF3G, EIF3H, EIF3I, EIF3J, EIF3K, EIF3L and EIF3M. The eIF-3 complex appears to include 3 stable modules: module A is composed of EIF3A, EIF3B, EIF3G and EIF3I; module B is composed of EIF3F, EIF3H, and EIF3M; and module C is composed of EIF3C, EIF3D, EIF3E, EIF3K and EIF3L. EIF3C of module C binds EIF3B of module A and EIF3H of module B, thereby linking the three modules. EIF3J is a labile subunit that binds to the eIF-3 complex via EIF3B. The eIF-3 complex may interact with RPS6KB1 under conditions of nutrient depletion. Mitogenic stimulation may lead to binding and activation of a complex composed of MTOR and RPTOR, leading to phosphorylation and release of RPS6KB1 and binding of EIF4B to eIF-3. Interacts with RNF139; the interaction leads to protein translation inhibitions in a ubiquitination-dependent manner. Interacts with DTX1, the interaction is required for deubiquitinating activity towards NOTCH1. In terms of processing, phosphorylation is enhanced upon serum stimulation. Phosphorylated during apoptosis by caspase-processed CDK11.

It is found in the cytoplasm. The enzyme catalyses Thiol-dependent hydrolysis of ester, thioester, amide, peptide and isopeptide bonds formed by the C-terminal Gly of ubiquitin (a 76-residue protein attached to proteins as an intracellular targeting signal).. Its function is as follows. Component of the eukaryotic translation initiation factor 3 (eIF-3) complex, which is required for several steps in the initiation of protein synthesis. The eIF-3 complex associates with the 40S ribosome and facilitates the recruitment of eIF-1, eIF-1A, eIF-2:GTP:methionyl-tRNAi and eIF-5 to form the 43S pre-initiation complex (43S PIC). The eIF-3 complex stimulates mRNA recruitment to the 43S PIC and scanning of the mRNA for AUG recognition. The eIF-3 complex is also required for disassembly and recycling of post-termination ribosomal complexes and subsequently prevents premature joining of the 40S and 60S ribosomal subunits prior to initiation. The eIF-3 complex specifically targets and initiates translation of a subset of mRNAs involved in cell proliferation, including cell cycling, differentiation and apoptosis, and uses different modes of RNA stem-loop binding to exert either translational activation or repression. Functionally, deubiquitinates activated NOTCH1, promoting its nuclear import, thereby acting as a positive regulator of Notch signaling. In Mus musculus (Mouse), this protein is Eukaryotic translation initiation factor 3 subunit F (Eif3f).